A 113-amino-acid chain; its full sequence is Nucleoid-associated protein RHA1_ro04210 (113 aa).

The protein belongs to the YbaB/EbfC family. In terms of assembly, homodimer.

The protein resides in the cytoplasm. It localises to the nucleoid. Functionally, binds to DNA and alters its conformation. May be involved in regulation of gene expression, nucleoid organization and DNA protection. In Rhodococcus jostii (strain RHA1), this protein is Nucleoid-associated protein RHA1_ro04210.